The primary structure comprises 239 residues: Probable intron-encoded endonuclease I-ZbiI (239 aa).

Belongs to the LAGLIDADG endonuclease family.

It is found in the mitochondrion. In terms of biological role, endonuclease involved in mitochondrial 21S rRNA gene intron homing. This is Probable intron-encoded endonuclease I-ZbiI from Zygosaccharomyces bisporus.